Here is a 548-residue protein sequence, read N- to C-terminus: Chaperonin GroEL 2 (548 aa).

ATP is bound by residues 30 to 33 (TLGP), K51, 87 to 91 (DGTTT), G415, 479 to 481 (NAA), and D495. Residues 524 to 548 (APKDAPPTAPAGVPGAGAGGPGFDF) are disordered. Residues 537-548 (PGAGAGGPGFDF) show a composition bias toward gly residues.

The protein belongs to the chaperonin (HSP60) family. Forms a cylinder of 14 subunits composed of two heptameric rings stacked back-to-back. Interacts with the co-chaperonin GroES.

The protein localises to the cytoplasm. It carries out the reaction ATP + H2O + a folded polypeptide = ADP + phosphate + an unfolded polypeptide.. Functionally, together with its co-chaperonin GroES, plays an essential role in assisting protein folding. The GroEL-GroES system forms a nano-cage that allows encapsulation of the non-native substrate proteins and provides a physical environment optimized to promote and accelerate protein folding. This chain is Chaperonin GroEL 2, found in Burkholderia pseudomallei (strain 668).